The chain runs to 617 residues: Dihydroxy-acid dehydratase (617 aa).

Residue aspartate 81 participates in Mg(2+) binding. Cysteine 122 provides a ligand contact to [2Fe-2S] cluster. Residues aspartate 123 and lysine 124 each contribute to the Mg(2+) site. The residue at position 124 (lysine 124) is an N6-carboxylysine. Cysteine 195 lines the [2Fe-2S] cluster pocket. Glutamate 492 lines the Mg(2+) pocket. The Proton acceptor role is filled by serine 518.

It belongs to the IlvD/Edd family. As to quaternary structure, homodimer. [2Fe-2S] cluster serves as cofactor. The cofactor is Mg(2+).

The catalysed reaction is (2R)-2,3-dihydroxy-3-methylbutanoate = 3-methyl-2-oxobutanoate + H2O. The enzyme catalyses (2R,3R)-2,3-dihydroxy-3-methylpentanoate = (S)-3-methyl-2-oxopentanoate + H2O. Its pathway is amino-acid biosynthesis; L-isoleucine biosynthesis; L-isoleucine from 2-oxobutanoate: step 3/4. It functions in the pathway amino-acid biosynthesis; L-valine biosynthesis; L-valine from pyruvate: step 3/4. Functionally, functions in the biosynthesis of branched-chain amino acids. Catalyzes the dehydration of (2R,3R)-2,3-dihydroxy-3-methylpentanoate (2,3-dihydroxy-3-methylvalerate) into 2-oxo-3-methylpentanoate (2-oxo-3-methylvalerate) and of (2R)-2,3-dihydroxy-3-methylbutanoate (2,3-dihydroxyisovalerate) into 2-oxo-3-methylbutanoate (2-oxoisovalerate), the penultimate precursor to L-isoleucine and L-valine, respectively. This is Dihydroxy-acid dehydratase from Buchnera aphidicola subsp. Cinara cedri (strain Cc).